The primary structure comprises 3907 residues: Cyclo-acetoacetyl-L-tryptophan synthase (3907 aa).

One can recognise a Ketosynthase family 3 (KS3) domain in the interval 2-436; it reads KTPIAVVGTA…GTNAHAIIES (435 aa). Residues Cys-176, His-313, and His-356 each act as for beta-ketoacyl synthase activity in the active site. Residues 555–870 are malonyl-CoA:ACP transacylase (MAT) domain; the sequence is IFTGQGAQWA…SLLRRGQNDL (316 aa). An N-terminal hotdog fold region spans residues 937-1074; the sequence is HPLLGRRSAD…ARLTLHLGDA (138 aa). The tract at residues 937–1236 is dehydratase (DH) domain; sequence HPLLGRRSAD…GLVMKSVPQP (300 aa). The PKS/mFAS DH domain maps to 937-1239; sequence HPLLGRRSAD…MKSVPQPDTS (303 aa). Residues 1092-1239 form a C-terminal hotdog fold region; sequence LAPVDVADLY…MKSVPQPDTS (148 aa). Residues 1386-1573 are methyltransferase (MT) domain; the sequence is AAMFSQLSKD…FSGIDHIFHD (188 aa). Residues 2064 to 2238 form a ketoreductase (KR)domain region; that stretch reads GTYFMIDMAT…VGSVMALGMV (175 aa). The interval 2324 to 2352 is disordered; it reads TKEGQYAEQEDSPSLLVPDEQLQESGPGR. A Carrier 1 domain is found at 2356–2430; that stretch reads DDLLARLSGK…LCEKAVPKPN (75 aa). An O-(pantetheine 4'-phosphoryl)serine modification is found at Ser-2390. Residues 2504-2926 are condensation; it reads MSPHQSQIWF…SSNPLISVQS (423 aa). The adenylation stretch occupies residues 2959–3359; sequence FQDMVDQYGD…GSLILLGRMD (401 aa). One can recognise a Carrier 2 domain in the interval 3474–3549; it reads KRLTLGEGEL…QMALKVDARK (76 aa). O-(pantetheine 4'-phosphoryl)serine is present on Ser-3509. The segment at 3594–3813 is reductase (RED) domain; sequence LTGSTSFLGR…DFQKVEIIAE (220 aa).

The protein in the C-terminal section; belongs to the NRP synthetase family.

It catalyses the reaction L-tryptophan + malonyl-CoA + acetyl-CoA = cyclo-acetoacetyl-L-tryptophan + CO2 + 2 CoA + H2O. Its pathway is secondary metabolite biosynthesis. Functionally, hybrid PKS-NRPS synthetase; part of the gene cluster that mediates the biosynthesis of the fungal neurotoxin cyclopiazonic acid (CPA), a nanomolar inhibitor of Ca(2+)-ATPase with a unique pentacyclic indole tetramic acid scaffold. The hybrid two module polyketide synthase-nonribosomal peptide synthetase (PKS-NRPS) cpaS incorporates acetyl-CoA, malonyl-CoA, and tryptophan (Trp) and utilizes a C-terminal redox-incompetent reductase domain to make and release the tryptophan tetramic acid, cyclo-acetoacetyl-L-tryptophan (c-AATrp), as the first intermediate in the pathway. CpaS catalyzes a Dieckmann-type cyclization on the N-acetoacetyl-Trp intermediate bound in thioester linkage to the phosphopantetheinyl arm of the T domain to form and release c-AATrp. CpaD then regiospecifically dimethylallylates c-AATrp to form beta-cyclopiazonic acid. CpaD discriminates against free Trp but accepts tryptophan-containing thiohydantoins, diketopiperazines, and linear peptides as substrates for C4-prenylation and also acts as regiospecific O-dimethylallyltransferase (DMAT) on a tyrosine-derived tetramic acid. The beta-cyclopiazonate dehydrogenase cpaO then carries out the dehydrogenation of beta-CPA to yield an unstable enimine product, which is captured by intramolecular cyclization to create the pentacyclic fused scaffold of alpha-cyclopiazonate. Finally, the cytochrome P450 monooxygenase cpaH mediates the conversion of CPA into the less toxic 2-oxocyclopiazonic acid, the end product of the CPA pathway in A.oryza. The sequence is that of Cyclo-acetoacetyl-L-tryptophan synthase from Aspergillus oryzae (Yellow koji mold).